We begin with the raw amino-acid sequence, 345 residues long: Leucine zipper protein 2 (345 aa).

The first 19 residues, 1–19 (MKFNAAHYLLPLLPALVLS), serve as a signal peptide directing secretion. The stretch at 16 to 211 (LVLSTRQDYE…QMKAMKETVQ (196 aa)) forms a coiled coil. N-linked (GlcNAc...) asparagine glycosylation is present at N133. The segment at 164–192 (LRYGKKDLLFKAQQLTELEQKLAVAKNEL) is leucine-zipper. The tract at residues 223 to 345 (PPLSLMPSNP…GTPAREEKLL (123 aa)) is disordered. The span at 261 to 277 (GHHDSSQVQATKEESRR) shows a compositional bias: basic and acidic residues. Over residues 298 to 313 (PQSNSTAESELTTQKL) the composition is skewed to polar residues. N-linked (GlcNAc...) asparagine glycosylation occurs at N301.

As to expression, expression found only in the brain and spinal cord.

The protein resides in the secreted. This is Leucine zipper protein 2 (Luzp2) from Mus musculus (Mouse).